Here is a 356-residue protein sequence, read N- to C-terminus: Phosphate acyltransferase (356 aa).

Belongs to the PlsX family. As to quaternary structure, homodimer. Probably interacts with PlsY.

It is found in the cytoplasm. It carries out the reaction a fatty acyl-[ACP] + phosphate = an acyl phosphate + holo-[ACP]. It functions in the pathway lipid metabolism; phospholipid metabolism. Functionally, catalyzes the reversible formation of acyl-phosphate (acyl-PO(4)) from acyl-[acyl-carrier-protein] (acyl-ACP). This enzyme utilizes acyl-ACP as fatty acyl donor, but not acyl-CoA. This is Phosphate acyltransferase from Stutzerimonas stutzeri (strain A1501) (Pseudomonas stutzeri).